We begin with the raw amino-acid sequence, 110 residues long: Large ribosomal subunit protein uL22 (110 aa).

It belongs to the universal ribosomal protein uL22 family. As to quaternary structure, part of the 50S ribosomal subunit.

This protein binds specifically to 23S rRNA; its binding is stimulated by other ribosomal proteins, e.g. L4, L17, and L20. It is important during the early stages of 50S assembly. It makes multiple contacts with different domains of the 23S rRNA in the assembled 50S subunit and ribosome. Its function is as follows. The globular domain of the protein is located near the polypeptide exit tunnel on the outside of the subunit, while an extended beta-hairpin is found that lines the wall of the exit tunnel in the center of the 70S ribosome. This Photorhabdus laumondii subsp. laumondii (strain DSM 15139 / CIP 105565 / TT01) (Photorhabdus luminescens subsp. laumondii) protein is Large ribosomal subunit protein uL22.